The sequence spans 174 residues: Crossover junction endodeoxyribonuclease RuvC (174 aa).

Residues aspartate 8, glutamate 68, and aspartate 140 contribute to the active site. Mg(2+) is bound by residues aspartate 8, glutamate 68, and aspartate 140.

This sequence belongs to the RuvC family. As to quaternary structure, homodimer which binds Holliday junction (HJ) DNA. The HJ becomes 2-fold symmetrical on binding to RuvC with unstacked arms; it has a different conformation from HJ DNA in complex with RuvA. In the full resolvosome a probable DNA-RuvA(4)-RuvB(12)-RuvC(2) complex forms which resolves the HJ. Requires Mg(2+) as cofactor.

The protein localises to the cytoplasm. The catalysed reaction is Endonucleolytic cleavage at a junction such as a reciprocal single-stranded crossover between two homologous DNA duplexes (Holliday junction).. Its function is as follows. The RuvA-RuvB-RuvC complex processes Holliday junction (HJ) DNA during genetic recombination and DNA repair. Endonuclease that resolves HJ intermediates. Cleaves cruciform DNA by making single-stranded nicks across the HJ at symmetrical positions within the homologous arms, yielding a 5'-phosphate and a 3'-hydroxyl group; requires a central core of homology in the junction. The consensus cleavage sequence is 5'-(A/T)TT(C/G)-3'. Cleavage occurs on the 3'-side of the TT dinucleotide at the point of strand exchange. HJ branch migration catalyzed by RuvA-RuvB allows RuvC to scan DNA until it finds its consensus sequence, where it cleaves and resolves the cruciform DNA. The protein is Crossover junction endodeoxyribonuclease RuvC of Legionella pneumophila (strain Paris).